The following is a 1343-amino-acid chain: DNA-directed RNA polymerase subunit beta (1343 aa).

This sequence belongs to the RNA polymerase beta chain family. The RNAP catalytic core consists of 2 alpha, 1 beta, 1 beta' and 1 omega subunit. When a sigma factor is associated with the core the holoenzyme is formed, which can initiate transcription.

The enzyme catalyses RNA(n) + a ribonucleoside 5'-triphosphate = RNA(n+1) + diphosphate. Its function is as follows. DNA-dependent RNA polymerase catalyzes the transcription of DNA into RNA using the four ribonucleoside triphosphates as substrates. The sequence is that of DNA-directed RNA polymerase subunit beta from Haemophilus influenzae (strain PittEE).